Consider the following 39-residue polypeptide: Omega-theraphotoxin-Asp1g (39 aa).

3 disulfides stabilise this stretch: Cys4–Cys25, Cys8–Cys31, and Cys17–Cys36.

The protein belongs to the neurotoxin 12 (Hwtx-2) family. 06 (TXP1) subfamily. Expressed by the venom gland.

Its subcellular location is the secreted. Inhibits voltage-gated calcium channels (Cav) in rat cerebellar granule cells. Has insecticidal activity. The chain is Omega-theraphotoxin-Asp1g from Aphonopelma sp. (American tarantula).